Reading from the N-terminus, the 729-residue chain is Fatty acid oxidation complex subunit alpha (729 aa).

Residues 1 to 189 (MLYKGDTLYL…KIGLVDGVVK (189 aa)) are enoyl-CoA hydratase/isomerase. Asp296 is a substrate binding site. The 3-hydroxyacyl-CoA dehydrogenase stretch occupies residues 311–729 (ETPKQAAVLG…ARAVGDLKTA (419 aa)). Residues Met324, Asp343, 400–402 (VVE), Lys407, and Ser429 contribute to the NAD(+) site. Residue His450 is the For 3-hydroxyacyl-CoA dehydrogenase activity of the active site. Asn453 contributes to the NAD(+) binding site. The substrate site is built by Asn500 and Tyr660.

The protein in the N-terminal section; belongs to the enoyl-CoA hydratase/isomerase family. This sequence in the C-terminal section; belongs to the 3-hydroxyacyl-CoA dehydrogenase family. As to quaternary structure, heterotetramer of two alpha chains (FadB) and two beta chains (FadA).

The enzyme catalyses a (3S)-3-hydroxyacyl-CoA + NAD(+) = a 3-oxoacyl-CoA + NADH + H(+). The catalysed reaction is a (3S)-3-hydroxyacyl-CoA = a (2E)-enoyl-CoA + H2O. It carries out the reaction a 4-saturated-(3S)-3-hydroxyacyl-CoA = a (3E)-enoyl-CoA + H2O. It catalyses the reaction (3S)-3-hydroxybutanoyl-CoA = (3R)-3-hydroxybutanoyl-CoA. The enzyme catalyses a (3Z)-enoyl-CoA = a 4-saturated (2E)-enoyl-CoA. The catalysed reaction is a (3E)-enoyl-CoA = a 4-saturated (2E)-enoyl-CoA. It functions in the pathway lipid metabolism; fatty acid beta-oxidation. In terms of biological role, involved in the aerobic and anaerobic degradation of long-chain fatty acids via beta-oxidation cycle. Catalyzes the formation of 3-oxoacyl-CoA from enoyl-CoA via L-3-hydroxyacyl-CoA. It can also use D-3-hydroxyacyl-CoA and cis-3-enoyl-CoA as substrate. The sequence is that of Fatty acid oxidation complex subunit alpha from Escherichia fergusonii (strain ATCC 35469 / DSM 13698 / CCUG 18766 / IAM 14443 / JCM 21226 / LMG 7866 / NBRC 102419 / NCTC 12128 / CDC 0568-73).